The sequence spans 334 residues: MNDSSVIYRAIVTSKFRTEKMLNFYNSIGSGPDKNTIFITFGRSEPWSSNENEVGFAPPYPTDSVLGVTDMWTHMMGTVKVLPSMLDAVIPRRDWGDTRYPDPYTFRINDIVVCNSAPYNATESGAGWLVYRCLDVPDTGMCSIASLTDKDECLKLGGKWTPSARSMTPPEGRGDAEGTIEPGDGYVWEYLFEIPPDVSINRCTNEYIVVPWPEELKEDPTRWGYEDNLTWQQDDFGLIYRVKANTIRFKAYLDSVYFPEAALPGNKGFRQISIITNPLEAKAHPNDPNVKAEKDYYDPEDLMRHSGEMIYMENRPPIIMAMDQTEEINILFTF.

Cysteine 142 and cysteine 153 are disulfide-bonded.

It belongs to the tevenvirinae baseplate structural protein gp8 family. In terms of assembly, homodimer. Interacts with gp7. Part of the baseplate macromolecular complex which consists of gp5, gp5.4, gp27 (central spike complex); gp6, gp25, gp53 (inner baseplate); gp7, gp8 (intermediate baseplate); gp9, gp10, gp11, gp12 (peripheral); gp48 and gp54 (proximal region of the tail tube).

It localises to the virion. Intermediate baseplate protein. Involved in the tail assembly. This is Baseplate wedge protein gp8 (8) from Enterobacteria phage T4 (Bacteriophage T4).